A 662-amino-acid chain; its full sequence is Interleukin-12 receptor subunit beta-1 (662 aa).

The N-terminal stretch at 1–23 (MEPLVTWVVPLLFLFLLSRQGAA) is a signal peptide. Residues 24-545 (CRTSECCFQD…RFSIEVQVSD (522 aa)) are Extracellular-facing. Fibronectin type-III domains follow at residues 46–136 (GPRD…LYNS), 142–234 (PLGD…VPPE), 237–337 (PQPQ…IPAD), 338–444 (THTE…GNAS), and 448–542 (TPHH…IEVQ). C52 and C62 form a disulfide bridge. A glycan (N-linked (GlcNAc...) asparagine) is linked at N121. A WSXWS motif motif is present at residues 222–226 (WSKWS). Residues N329, N346, N352, N442, and N456 are each glycosylated (N-linked (GlcNAc...) asparagine). The helical transmembrane segment at 546-570 (WLIFFASLGSFLSILLVGVLGYLGL) threads the bilayer. Topologically, residues 571–662 (NRAARHLCPP…EDGDRCKAKM (92 aa)) are cytoplasmic. The Box 1 motif motif lies at 577-585 (LCPPLPTPC). Positions 626–637 (GERTEPLEKTEL) are enriched in basic and acidic residues. Residues 626 to 648 (GERTEPLEKTELPEGAPELALDT) are disordered.

The protein belongs to the type I cytokine receptor family. Type 2 subfamily. As to quaternary structure, dimer or oligomer; disulfide-linked. Interacts with IL12RB2 to form the high affinity IL12 receptor. Heterodimer with IL23R; in presence of IL23. The heterodimer forms the IL23 receptor.

The protein localises to the membrane. In terms of biological role, functions as an interleukin receptor which binds interleukin-12 with low affinity and is involved in IL12 transduction. Associated with IL12RB2 it forms a functional, high affinity receptor for IL12. Also associates with IL23R to form the interleukin-23 receptor which functions in IL23 signal transduction probably through activation of the Jak-Stat signaling cascade. The chain is Interleukin-12 receptor subunit beta-1 (IL12RB1) from Homo sapiens (Human).